The chain runs to 490 residues: RNA-binding protein P (490 aa).

Residues 1-112 (MGKKRKLDSK…EEEEAAERDA (112 aa)) are disordered. Over residues 13–36 (AAARSAAARAAAAAAAAAAAAAVA) the composition is skewed to low complexity. Over residues 74-108 (GGEEEEVEEVEVEEEVEVDEDEDGEGEGEEEEEAA) the composition is skewed to acidic residues. 2 consecutive RRM domains span residues 156–233 (RKIF…LASV) and 267–343 (RKIF…QKAI).

Forms homodimers. Interacts with RBP-L and RBP-208. Interacts with NSF.

Its subcellular location is the nucleus. It localises to the cytoplasm. In terms of biological role, RNA-binding protein that binds to a cis-localization element or zipcode, within the 5'-CDS of prolamine RNA. Binds strongly to glutelin mRNA, particularly to 3'-UTR and zipcode RNA. Recognizes and binds to glutelin zipcode RNA, which is required for proper mRNA localization to cisternal endoplasmic reticulum. Exhibits strong binding activity to a glutelin intron sequence and may participate in mRNA splicing. Required for the correct localization of glutelin and prolamine mRNA in endosperm cells during grain development. RBP-P and RBP-L form a quaternary complex with the membrane trafficking factors NSF and RAB5A. This quaternay complex carries glutelin mRNAs for active transport on endosomes to the cortical endoplasmic reticulum membrane, and enables endosome-mediated glutelin mRNA transport in endosperm cells. The protein is RNA-binding protein P of Oryza sativa subsp. japonica (Rice).